Reading from the N-terminus, the 335-residue chain is L-carnitine dehydrogenase (335 aa).

29–34 (GTGVIG) serves as a coordination point for NAD(+).

The protein belongs to the 3-hydroxyacyl-CoA dehydrogenase family. L-carnitine dehydrogenase subfamily. In terms of assembly, homodimer.

Its subcellular location is the cytoplasm. The enzyme catalyses carnitine + NAD(+) = 3-dehydrocarnitine + NADH + H(+). It participates in amine and polyamine metabolism; carnitine metabolism. Its function is as follows. Catalyzes the NAD(+)-dependent oxidation of L-carnitine to 3-dehydrocarnitine. The polypeptide is L-carnitine dehydrogenase (Streptomyces griseus subsp. griseus (strain JCM 4626 / CBS 651.72 / NBRC 13350 / KCC S-0626 / ISP 5235)).